Here is a 340-residue protein sequence, read N- to C-terminus: UDP-3-O-acylglucosamine N-acyltransferase (340 aa).

The active-site Proton acceptor is the His-240.

It belongs to the transferase hexapeptide repeat family. LpxD subfamily. In terms of assembly, homotrimer.

The enzyme catalyses a UDP-3-O-[(3R)-3-hydroxyacyl]-alpha-D-glucosamine + a (3R)-hydroxyacyl-[ACP] = a UDP-2-N,3-O-bis[(3R)-3-hydroxyacyl]-alpha-D-glucosamine + holo-[ACP] + H(+). It functions in the pathway bacterial outer membrane biogenesis; LPS lipid A biosynthesis. In terms of biological role, catalyzes the N-acylation of UDP-3-O-acylglucosamine using 3-hydroxyacyl-ACP as the acyl donor. Is involved in the biosynthesis of lipid A, a phosphorylated glycolipid that anchors the lipopolysaccharide to the outer membrane of the cell. This chain is UDP-3-O-acylglucosamine N-acyltransferase, found in Pseudoalteromonas translucida (strain TAC 125).